A 716-amino-acid polypeptide reads, in one-letter code: MIYQSPTIQVELLEDNIAKLCFNAPGSVNKFDRETLTSLDAALDSIKQDSNIKALVLTSSKDTFIVGADITEFLGLFAQDDAVLLSWVEQANAVFNKLEDLPFPTASAIKGFALGGGCETILATDFRIADTTAKIGLPETKLGIIPGFGGTVRLPRVIGADNALEWITTGKDQRAEDALKVGAVDAVVAPQALEAAAIQMLKDAVAEKLDWQARRNRKLSALTLPKLEAMMSFTTAKGMVFAVAGKHYPAPMAAVSVIEQASTKGRAEALQIEHQAFIKLAKTDVAKALIGIFLNDQFVKGKAKKAGKLAKEVNNAAVLGAGIMGGGIAYQSASKGTPIVMKDIAQPALDLGLNEAAKLLSAQVARGRSTPEKMAKVLNNITPSLDYAAIKHSDVVVEAVVEHPKIKAQVLAEVEGYVSEDAIIASNTSTISINLLAKSMKKPERFCGMHFFNPVHKMPLVEIIRGEHSSEETIASVVAYASKMGKTPIVVNDCPGFFVNRVLFPYFAGFNGLLAEGGDFAAIDKVMEKQFGWPMGPAYLLDVVGLDTGHHAQAVMAEGFPDRMGKSGTDAIDVMFENKRLGQKNGKGFYVYSVDSRGKPKKDVDPTSYGLLKDAFGELKAFEADDIIARTMIPMIIETVRCLEEGIVASPAEADMGLVYGLGFPPFRGGVFRYLDTMGVANFVALADKYAHLGGLYQVTDAMRTLAANNGSYYQA.

The tract at residues 1-189 is enoyl-CoA hydratase/isomerase; the sequence is MIYQSPTIQV…KVGAVDAVVA (189 aa). Aspartate 296 is a binding site for substrate. Residues 311–716 form a 3-hydroxyacyl-CoA dehydrogenase region; the sequence is KEVNNAAVLG…AANNGSYYQA (406 aa). NAD(+) contacts are provided by residues methionine 324, aspartate 343, 400 to 402, lysine 407, and serine 429; that span reads VVE. Histidine 450 acts as the For 3-hydroxyacyl-CoA dehydrogenase activity in catalysis. Asparagine 453 is an NAD(+) binding site. 2 residues coordinate substrate: asparagine 500 and tyrosine 660.

It in the N-terminal section; belongs to the enoyl-CoA hydratase/isomerase family. In the C-terminal section; belongs to the 3-hydroxyacyl-CoA dehydrogenase family. As to quaternary structure, heterotetramer of two alpha chains (FadB) and two beta chains (FadA).

It catalyses the reaction a (3S)-3-hydroxyacyl-CoA + NAD(+) = a 3-oxoacyl-CoA + NADH + H(+). The enzyme catalyses a (3S)-3-hydroxyacyl-CoA = a (2E)-enoyl-CoA + H2O. It carries out the reaction a 4-saturated-(3S)-3-hydroxyacyl-CoA = a (3E)-enoyl-CoA + H2O. The catalysed reaction is (3S)-3-hydroxybutanoyl-CoA = (3R)-3-hydroxybutanoyl-CoA. It catalyses the reaction a (3Z)-enoyl-CoA = a 4-saturated (2E)-enoyl-CoA. The enzyme catalyses a (3E)-enoyl-CoA = a 4-saturated (2E)-enoyl-CoA. It functions in the pathway lipid metabolism; fatty acid beta-oxidation. In terms of biological role, involved in the aerobic and anaerobic degradation of long-chain fatty acids via beta-oxidation cycle. Catalyzes the formation of 3-oxoacyl-CoA from enoyl-CoA via L-3-hydroxyacyl-CoA. It can also use D-3-hydroxyacyl-CoA and cis-3-enoyl-CoA as substrate. This chain is Fatty acid oxidation complex subunit alpha, found in Shewanella baltica (strain OS155 / ATCC BAA-1091).